An 812-amino-acid polypeptide reads, in one-letter code: Collagen-like protein 5 (812 aa).

2 N-linked (GlcNAc...) asparagine; by host glycosylation sites follow: N13 and N83. Collagen-like domains lie at 69 to 128 (GASG…KGDD), 143 to 502 (GEKG…KGDN), and 506 to 565 (GETG…KGEA). Positions 71–568 (SGAQGVKGDP…PGIKGEAGTN (498 aa)) are disordered. 4 stretches are compositionally biased toward basic and acidic residues: residues 88–112 (TKGE…EKGD), 121–435 (SKGD…ETGS), 444–523 (SKGD…KGIK), and 531–561 (VKGD…DPGI). Residue N502 is glycosylated (N-linked (GlcNAc...) asparagine; by host). N-linked (GlcNAc...) asparagine; by host glycans are attached at residues N637, N658, and N667. The interval 730–802 (GQARTNGAST…VSASGGRGGD (73 aa)) is disordered. A compositionally biased stretch (gly residues) spans 752–765 (FGGGGGGASGFAKG).

May be hydroxylated on lysine by the viral-encoded procollagen-lysine,2-oxoglutarate 5-dioxygenase.

The protein resides in the virion. May participate in the formation of a layer of cross-linked glycosylated fibrils at the viral surface thus giving it a hairy-like appearance. The sequence is that of Collagen-like protein 5 from Acanthamoeba polyphaga (Amoeba).